A 219-amino-acid chain; its full sequence is Biofilm-associated metzincin protease inhibitor (219 aa).

A helical transmembrane segment spans residues 4–24; it reads TWIYAASAAAIGGALIGGWLL. The span at 191 to 204 shows a compositional bias: basic and acidic residues; sequence DIAARSDPHGDHVD. Residues 191 to 219 are disordered; the sequence is DIAARSDPHGDHVDAPLAELPPMPPPAQG. Over residues 209-219 the composition is skewed to pro residues; it reads ELPPMPPPAQG.

It is found in the cell membrane. Its function is as follows. Inhibitor of the metalloendopeptidase Mep72. Forms a protein-protein complex with the protease, which is the product of its coregulated adjacent gene, and probably prevents premature protease activity until the protein has been secreted. This Pseudomonas aeruginosa (strain ATCC 15692 / DSM 22644 / CIP 104116 / JCM 14847 / LMG 12228 / 1C / PRS 101 / PAO1) protein is Biofilm-associated metzincin protease inhibitor.